The primary structure comprises 79 residues: Three-finger toxin A2 (79 aa).

Positions 1–21 are cleaved as a signal peptide; that stretch reads MKTLLLTLVVVTIVCLDLGNS. Cystine bridges form between Cys-24-Cys-41, Cys-34-Cys-59, Cys-63-Cys-71, and Cys-72-Cys-77.

It belongs to the three-finger toxin family. Short-chain subfamily. As to expression, expressed by the venom gland.

The protein localises to the secreted. The protein is Three-finger toxin A2 of Micrurus laticollaris (Balsas coral snake).